Consider the following 564-residue polypeptide: DNA ligase B (564 aa).

Lys-130 (N6-AMP-lysine intermediate) is an active-site residue.

Belongs to the NAD-dependent DNA ligase family. LigB subfamily.

The catalysed reaction is NAD(+) + (deoxyribonucleotide)n-3'-hydroxyl + 5'-phospho-(deoxyribonucleotide)m = (deoxyribonucleotide)n+m + AMP + beta-nicotinamide D-nucleotide.. Catalyzes the formation of phosphodiester linkages between 5'-phosphoryl and 3'-hydroxyl groups in double-stranded DNA using NAD as a coenzyme and as the energy source for the reaction. The sequence is that of DNA ligase B from Klebsiella pneumoniae subsp. pneumoniae (strain ATCC 700721 / MGH 78578).